The primary structure comprises 287 residues: Protein HEXIM2 (287 aa).

Disordered regions lie at residues 1 to 212 (MKDW…RSKE) and 266 to 287 (RLRQ…QPGS). S31 bears the Phosphoserine mark. Phosphothreonine is present on residues T34 and T48. 5 positions are modified to phosphoserine: S53, S55, S73, S78, and S83. Residues 89–105 (ARKKHRRRPSKRKRHWR) are compositionally biased toward basic residues. Positions 115-134 (KQQRDERQSQRASRVREEMF) are enriched in basic and acidic residues. An interaction with P-TEFb region spans residues 142–145 (PYNT). Basic and acidic residues-rich tracts occupy residues 181-212 (GQGR…RSKE) and 266-280 (RLRQ…EGGR). Positions 208–278 (GRSKEELVRD…QENEMWNREG (71 aa)) form a coiled coil. Residues 227 to 287 (QAEEEMRRLR…GGRRGGQPGS (61 aa)) form an interaction with CCNT1, HEXIM1 and HEXIM2 region.

Belongs to the HEXIM family. In terms of assembly, homooligomer and heterooligomer with HEXIM1; probably dimeric. Core component of the 7SK RNP complex, at least composed of 7SK RNA, LARP7, MEPCE, HEXIM1 (or HEXIM2) and P-TEFb (composed of CDK9 and CCNT1/cyclin-T1). Interacts with CCNT2.

It localises to the nucleus. Functionally, transcriptional regulator which functions as a general RNA polymerase II transcription inhibitor. Core component of the 7SK RNP complex: in cooperation with 7SK snRNA sequesters P-TEFb in a large inactive 7SK snRNP complex preventing RNA polymerase II phosphorylation and subsequent transcriptional elongation. The protein is Protein HEXIM2 (HEXIM2) of Bos taurus (Bovine).